A 289-amino-acid chain; its full sequence is Bifunctional aminodeoxychorismate lyase / D-amino acid transaminase (289 aa).

Residue R50 participates in pyridoxal 5'-phosphate binding. N6-(pyridoxal phosphate)lysine is present on K149. Residues Y153, T216, and T217 each contribute to the pyridoxal 5'-phosphate site. A 2-oxoglutarate-binding site is contributed by S252. Residue S253 coordinates pyridoxal 5'-phosphate. Residues M254 and T255 each contribute to the 2-oxoglutarate site.

This sequence belongs to the class-IV pyridoxal-phosphate-dependent aminotransferase family. As to quaternary structure, homodimer. Pyridoxal 5'-phosphate is required as a cofactor.

It carries out the reaction 4-amino-4-deoxychorismate = 4-aminobenzoate + pyruvate + H(+). It catalyses the reaction D-alanine + 2-oxoglutarate = D-glutamate + pyruvate. Its pathway is cofactor biosynthesis; tetrahydrofolate biosynthesis; 4-aminobenzoate from chorismate: step 2/2. It functions in the pathway cell wall biogenesis; peptidoglycan biosynthesis. Its function is as follows. Bifunctional enzyme that catalyzes two enzymatic reactions in biochemically unrelated pathways: acts as an aminodeoxychorismate (ADC) lyase (ADCL) in folate biosynthesis, converting 4-amino-4-deoxychorismate (ADC) to 4-aminobenzoate (PABA), and as a D-amino acid transaminase (DAAT) in peptidoglycan (PG) biosynthesis. DAAT activity is strictly restricted to D-alanine and D-glutamate. May function as a metabolic toggle that alternates between ADCL and DAAT activity, prioritizing the former over the latter in response to substrate accumulation. Bifunctionality of this enzyme provides a failsafe mechanism for a metabolic coupling between nucleic acid and cell wall biosynthesis that appears to ensure prioritization of PABA production over D-alanine/D-glutamate biosynthesis. The chain is Bifunctional aminodeoxychorismate lyase / D-amino acid transaminase from Mycobacterium tuberculosis (strain ATCC 25618 / H37Rv).